We begin with the raw amino-acid sequence, 447 residues long: Phosphatidylinositol 4-kinase type 2-alpha (447 aa).

The tract at residues 1–77 is disordered; that stretch reads MDETSPLVSP…HRNEFPEDPE (77 aa). A compositionally biased stretch (basic and acidic residues) spans 48 to 77; that stretch reads RSRERQPLLDRDRGASPRDPHRNEFPEDPE. In terms of domain architecture, PI3K/PI4K catalytic spans 92–421; the sequence is GIYPERIYQG…VQMPPVIVET (330 aa). The interval 98–104 is G-loop; it reads IYQGSSG. ATP contacts are provided by residues 99-105 and Lys120; that span reads YQGSSGS. The important for substrate binding stretch occupies residues 125–127; the sequence is EPY. The interval 133-146 is important for interaction with membranes; the sequence is KWTKWLQKLCCPCC. 4 S-palmitoyl cysteine lipidation sites follow: Cys142, Cys143, Cys145, and Cys146. Residue 229–232 participates in ATP binding; it reads QIFV. An important for interaction with membranes region spans residues 236 to 244; the sequence is KDADFWLRR. A catalytic loop region spans residues 273-281; that stretch reads RNTDRGNDN. The segment at 312–332 is activation loop; the sequence is AIDNGLAFPLKHPDSWRAYPF. Asp314 serves as a coordination point for ATP. The tract at residues 327–336 is important for interaction with membranes; sequence WRAYPFYWAW.

It belongs to the PI3/PI4-kinase family. Type II PI4K subfamily.

The protein localises to the golgi apparatus. It is found in the trans-Golgi network membrane. It localises to the membrane raft. The protein resides in the endosome. Its subcellular location is the cytoplasmic vesicle. The protein localises to the cell projection. It is found in the dendrite. It localises to the presynaptic cell membrane. The protein resides in the synapse. Its subcellular location is the synaptosome. The protein localises to the mitochondrion. It is found in the membrane. It localises to the cell membrane. The protein resides in the perikaryon. Its subcellular location is the neuron projection. The catalysed reaction is a 1,2-diacyl-sn-glycero-3-phospho-(1D-myo-inositol) + ATP = a 1,2-diacyl-sn-glycero-3-phospho-(1D-myo-inositol 4-phosphate) + ADP + H(+). In terms of biological role, membrane-bound phosphatidylinositol-4 kinase (PI4-kinase) that catalyzes the phosphorylation of phosphatidylinositol (PI) to phosphatidylinositol 4-phosphate (PI4P), a lipid that plays important roles in endocytosis, Golgi function, protein sorting and membrane trafficking. Besides, phosphorylation of phosphatidylinositol (PI) to phosphatidylinositol 4-phosphate (PI4P) is the first committed step in the generation of phosphatidylinositol 4,5-bisphosphate (PIP2), a precursor of the second messenger inositol 1,4,5-trisphosphate (InsP3). This Danio rerio (Zebrafish) protein is Phosphatidylinositol 4-kinase type 2-alpha (pi4k2a).